The sequence spans 146 residues: Ferredoxin-thioredoxin reductase catalytic chain, chloroplastic (146 aa).

The N-terminal 26 residues, 1–26, are a transit peptide targeting the chloroplast; it reads MMSMASTTASPFCPSPMPRGRKCTVR. Cysteine 85 is a binding site for [4Fe-4S] cluster. Cysteine 87 functions as the Nucleophile in the catalytic mechanism. Cysteine 87 and cysteine 117 form a disulfide bridge. The [4Fe-4S] cluster site is built by cysteine 104, cysteine 106, and cysteine 115.

The protein belongs to the ferredoxin thioredoxin reductase beta subunit family. In terms of assembly, heterodimer of subunit A (variable subunit) and subunit B (catalytic subunit). Heterodimeric FTR forms a complex with ferredoxin and thioredoxin. [4Fe-4S] cluster is required as a cofactor.

The protein localises to the plastid. Its subcellular location is the chloroplast. The catalysed reaction is [thioredoxin]-disulfide + 2 reduced [2Fe-2S]-[ferredoxin] + 2 H(+) = [thioredoxin]-dithiol + 2 oxidized [2Fe-2S]-[ferredoxin]. In terms of biological role, catalytic subunit of the ferredoxin-thioredoxin reductase (FTR), which catalyzes the two-electron reduction of thioredoxins by the electrons provided by reduced ferredoxin. The protein is Ferredoxin-thioredoxin reductase catalytic chain, chloroplastic of Oryza sativa subsp. japonica (Rice).